A 227-amino-acid polypeptide reads, in one-letter code: 2,3-bisphosphoglycerate-dependent phosphoglycerate mutase (227 aa).

Residues 7-14 (RHGFSEWN), 20-21 (TG), R59, 86-89 (ERHY), K97, 113-114 (RR), and 182-183 (GN) each bind substrate. H8 acts as the Tele-phosphohistidine intermediate in catalysis. The Proton donor/acceptor role is filled by E86.

This sequence belongs to the phosphoglycerate mutase family. BPG-dependent PGAM subfamily. As to quaternary structure, homodimer.

The enzyme catalyses (2R)-2-phosphoglycerate = (2R)-3-phosphoglycerate. The protein operates within carbohydrate degradation; glycolysis; pyruvate from D-glyceraldehyde 3-phosphate: step 3/5. Functionally, catalyzes the interconversion of 2-phosphoglycerate and 3-phosphoglycerate. The chain is 2,3-bisphosphoglycerate-dependent phosphoglycerate mutase from Haemophilus influenzae (strain ATCC 51907 / DSM 11121 / KW20 / Rd).